Reading from the N-terminus, the 164-residue chain is MEMTNAQRLILSNQYKMMTMLDPANAERYRRLQTIIERGYGLQMRELDREFGELKEETCRTIIDIMEMYHALHVSWSNLQDQQSIDERRVTFLGFDAATEARYLGYVRFMVNVEGRYTHFDAGTHGFNAQTPMWEKYQRMLNVWHACPRQYHLSANEINQIINA.

It belongs to the UPF0304 family.

This chain is UPF0304 protein YfbU (yfbU), found in Escherichia coli O6:H1 (strain CFT073 / ATCC 700928 / UPEC).